Here is a 205-residue protein sequence, read N- to C-terminus: Proteasome subunit beta type-3 (205 aa).

It belongs to the peptidase T1B family. In terms of assembly, the 26S proteasome consists of a 20S proteasome core and two 19S regulatory subunits. The 20S proteasome core is composed of 28 subunits that are arranged in four stacked rings, resulting in a barrel-shaped structure. The two end rings are each formed by seven alpha subunits, and the two central rings are each formed by seven beta subunits. The catalytic chamber with the active sites is on the inside of the barrel.

It is found in the cytoplasm. The protein resides in the nucleus. Non-catalytic component of the proteasome, a multicatalytic proteinase complex which is characterized by its ability to cleave peptides with Arg, Phe, Tyr, Leu, and Glu adjacent to the leaving group at neutral or slightly basic pH. The proteasome has an ATP-dependent proteolytic activity. The sequence is that of Proteasome subunit beta type-3 from Drosophila melanogaster (Fruit fly).